A 269-amino-acid polypeptide reads, in one-letter code: HTH-type transcriptional regulator Rv0792c (269 aa).

Residues 20–88 (VPASTQLAEA…QGLGTFVADP (69 aa)) enclose the HTH gntR-type domain. Residues 48-67 (ERELIDRSGLSRVTVRAAVG) constitute a DNA-binding region (H-T-H motif).

As to quaternary structure, homodimer.

With respect to regulation, DNA-binding activity is increased in the presence of L-arabinose and inhibited by the small molecule I-OMe-Tyrphostin. Functionally, transcriptional regulator required for survival in oxidative stress and for establishing infection in host tissues. Regulates the expression of a subset of genes involved in oxidative stress adaptation and virulence, enabling the bacteria to adapt and persist in host tissues. This Mycobacterium tuberculosis (strain ATCC 25618 / H37Rv) protein is HTH-type transcriptional regulator Rv0792c.